The following is a 461-amino-acid chain: UDP-N-acetylmuramoylalanine--D-glutamate ligase (461 aa).

ATP is bound at residue 123 to 129; it reads GTNGKTT.

Belongs to the MurCDEF family.

It localises to the cytoplasm. The catalysed reaction is UDP-N-acetyl-alpha-D-muramoyl-L-alanine + D-glutamate + ATP = UDP-N-acetyl-alpha-D-muramoyl-L-alanyl-D-glutamate + ADP + phosphate + H(+). The protein operates within cell wall biogenesis; peptidoglycan biosynthesis. In terms of biological role, cell wall formation. Catalyzes the addition of glutamate to the nucleotide precursor UDP-N-acetylmuramoyl-L-alanine (UMA). This Natranaerobius thermophilus (strain ATCC BAA-1301 / DSM 18059 / JW/NM-WN-LF) protein is UDP-N-acetylmuramoylalanine--D-glutamate ligase.